The following is a 98-amino-acid chain: Integration host factor subunit alpha (98 aa).

The tract at residues 49–71 (FGNFDLRDKNQRPGRNPKTGEDI) is disordered.

The protein belongs to the bacterial histone-like protein family. Heterodimer of an alpha and a beta chain.

Its function is as follows. This protein is one of the two subunits of integration host factor, a specific DNA-binding protein that functions in genetic recombination as well as in transcriptional and translational control. This is Integration host factor subunit alpha from Shewanella sp. (strain ANA-3).